The chain runs to 81 residues: Large ribosomal subunit protein bL31B (81 aa).

This sequence belongs to the bacterial ribosomal protein bL31 family. Type B subfamily. In terms of assembly, part of the 50S ribosomal subunit.

The chain is Large ribosomal subunit protein bL31B (rpmE2) from Lactiplantibacillus plantarum (strain ATCC BAA-793 / NCIMB 8826 / WCFS1) (Lactobacillus plantarum).